The sequence spans 376 residues: 26S proteasome non-ATPase regulatory subunit 13 (376 aa).

Residues 171–338 (SYYKDALRFL…KRVHMTWVQP (168 aa)) form the PCI domain. Position 298 is an N6-acetyllysine (Lys298).

The protein belongs to the proteasome subunit S11 family. In terms of assembly, component of the 19S proteasome regulatory particle complex. The 26S proteasome consists of a 20S core particle (CP) and two 19S regulatory subunits (RP). The regulatory particle is made of a lid composed of 9 subunits including PSMD13, a base containing 6 ATPases and few additional components.

Its function is as follows. Component of the 26S proteasome, a multiprotein complex involved in the ATP-dependent degradation of ubiquitinated proteins. This complex plays a key role in the maintenance of protein homeostasis by removing misfolded or damaged proteins, which could impair cellular functions, and by removing proteins whose functions are no longer required. Therefore, the proteasome participates in numerous cellular processes, including cell cycle progression, apoptosis, or DNA damage repair. The protein is 26S proteasome non-ATPase regulatory subunit 13 (Psmd13) of Mus musculus (Mouse).